A 3390-amino-acid chain; its full sequence is Genome polyprotein (3390 aa).

Residues 1 to 15 (MNNQRKKTGKPSINM) are interaction with host EXOC1. Residues 1–100 (MNNQRKKTGK…MLSIINKRKK (100 aa)) are Cytoplasmic-facing. Residues 37-72 (LLNGQGPMKLVMAFIAFLRFLAIPPTAGVLARWGTF) form a hydrophobic; homodimerization of capsid protein C region. Residues 101-114 (TSLCLMMIMPAALA) constitute a propeptide, ER anchor for the capsid protein C, removed in mature form by serine protease NS3. Residues 101 to 120 (TSLCLMMIMPAALAFHLTSR) form a helical membrane-spanning segment. At 121-243 (DGEPRMIVGK…VEKVETWALR (123 aa)) the chain is on the extracellular side. Asn183 is a glycosylation site (N-linked (GlcNAc...) asparagine; by host). Residues 244–264 (HPGFTILALFLAHYIGTSLTQ) traverse the membrane as a helical segment. Lys265 is a topological domain (cytoplasmic). The helical transmembrane segment at 266-280 (VVIFILLMLVTPSMT) threads the bilayer. Residues 281–723 (MRCVGVGNRD…VHQIFGSAYT (443 aa)) lie on the Extracellular side of the membrane. Intrachain disulfides connect Cys283-Cys310, Cys340-Cys401, Cys354-Cys385, and Cys372-Cys396. A glycan (N-linked (GlcNAc...) asparagine; by host) is linked at Asn347. The segment at 378-391 (DRGWGNGCGLFGKG) is fusion peptide. An N-linked (GlcNAc...) asparagine; by host glycan is attached at Asn433. 2 disulfide bridges follow: Cys463/Cys563 and Cys580/Cys611. The chain crosses the membrane as a helical span at residues 724 to 744 (ALFSGVSWVMKIGIGVLLTWI). Over 745–750 (GLNSKN) the chain is Cytoplasmic. The helical transmembrane segment at 751-771 (TSMSFSCIAIGIITLYLGAVV) threads the bilayer. At 772–1193 (QADMGCVINW…MIGSNASDRM (422 aa)) the chain is on the extracellular side. 6 cysteine pairs are disulfide-bonded: Cys777–Cys788, Cys828–Cys916, Cys952–Cys996, Cys1053–Cys1102, Cys1064–Cys1086, and Cys1085–Cys1089. N-linked (GlcNAc...) asparagine; by host glycans are attached at residues Asn903 and Asn980. N-linked (GlcNAc...) asparagine; by host glycans are attached at residues Asn1132 and Asn1188. Residues 1194–1218 (GMGVTYLALIATFKIQPFLALGFFL) form a helical membrane-spanning segment. Over 1219–1224 (RKLTSR) the chain is Cytoplasmic. A helical membrane pass occupies residues 1225–1243 (ENLLLGVGLAMATTLQLPE). Topologically, residues 1244-1267 (DIEQMANGIALGLMALKLITQFET) are lumenal. Residues 1268 to 1288 (YQLWTALISLTCSNTMFTLTV) form a helical membrane-spanning segment. Position 1289 (Ala1289) is a topological domain, cytoplasmic. The chain crosses the membrane as a helical span at residues 1290-1308 (WRTATLILAGVSLLPVCQS). At 1309-1315 (SSMRKTD) the chain is on the lumenal side. Residues 1316-1336 (WLPMAVAAMGVPPLPLFIFSL) traverse the membrane as a helical segment. The Cytoplasmic portion of the chain corresponds to 1337–1344 (KDTLKRRS). The helical transmembrane segment at 1345–1365 (WPLNEGVMAVGLVSILASSLL) threads the bilayer. The Lumenal portion of the chain corresponds to 1366 to 1368 (RND). A helical membrane pass occupies residues 1369-1389 (VPMAGPLVAGGLLIACYVITG). At 1390 to 1443 (TSADLTVEKAADITWEEEAEQTGVSHNLMITVDDDGTMRIKDDETENILTVLLK) the chain is on the cytoplasmic side. The segment at 1396–1435 (VEKAADITWEEEAEQTGVSHNLMITVDDDGTMRIKDDETE) is interacts with and activates NS3 protease. An intramembrane region (helical) is located at residues 1444–1464 (TALLIVSGVFPYSIPATLLVW). Residues 1465–2146 (HTWQKQTQRS…VEELPETMET (682 aa)) are Cytoplasmic-facing. The Peptidase S7 domain maps to 1474–1651 (SGVLWDVPSP…NAEPDGPTPE (178 aa)). Catalysis depends on charge relay system; for serine protease NS3 activity residues His1524, Asp1548, and Ser1608. One can recognise a Helicase ATP-binding domain in the interval 1654–1810 (EEMFKKRNLT…QSNAPIQDEE (157 aa)). The segment at 1658-1661 (KKRN) is important for RNA-binding. 1667–1674 (LHPGSGKT) is a binding site for ATP. Residues 1758 to 1761 (DEAH) carry the DEAH box motif. Positions 1820 to 1986 (SGNEWITDFA…GIIPALFEPE (167 aa)) constitute a Helicase C-terminal domain. N6-acetyllysine; by host is present on Lys1862. A helical membrane pass occupies residues 2147–2167 (LLLLGLMILLTGGAMLFLISG). Residues 2168–2169 (KG) lie on the Lumenal side of the membrane. Residues 2170–2190 (IGKTSIGLICVIASSGMLWMA) constitute an intramembrane region (helical). A topological domain (lumenal) is located at residue Glu2191. The chain crosses the membrane as a helical span at residues 2192 to 2212 (IPLQWIASAIVLEFFMMVLLI). Over 2213-2227 (PEPEKQRTPQDNQLA) the chain is Cytoplasmic. Residues 2228–2248 (YVVIGILTLAAIIAANEMGLL) traverse the membrane as a helical segment. At 2249 to 2273 (ETTKRDLGMSKEPGVVSPTSYLDVD) the chain is on the lumenal side. The helical intramembrane region spans 2274–2294 (LHPASAWTLYAVATTVITPML). Residues 2295-2305 (RHTIENSTANV) lie on the Lumenal side of the membrane. N-linked (GlcNAc...) asparagine; by host glycosylation is found at Asn2300 and Asn2304. Positions 2306–2326 (SLAAIANQAVVLMGLDKGWPI) form an intramembrane region, helical. Topologically, residues 2327 to 2346 (SKMDLGVPLLALGCYSQVNP) are lumenal. The chain crosses the membrane as a helical span at residues 2347 to 2367 (LTLTAAVLLLITHYAIIGPGL). Over 2368–2412 (QAKATREAQKRTAAGIMKNPTVDGIMTIDLDPVIYDSKFEKQLGQ) the chain is Cytoplasmic. Residues 2413 to 2433 (VMLLVLCAVQLLLMRTSWALC) form a helical membrane-spanning segment. The Lumenal portion of the chain corresponds to 2434–2458 (EALTLATGPITTLWEGSPGKFWNTT). The N-linked (GlcNAc...) asparagine; by host glycan is linked to Asn2456. A helical transmembrane segment spans residues 2459–2479 (IAVSMANIFRGSYLAGAGLAF). Over 2480 to 3390 (SIMKSVGTGK…KEEESEGAIW (911 aa)) the chain is Cytoplasmic. The mRNA cap 0-1 NS5-type MT domain occupies 2492–2753 (TGSQGETLGE…DVDLGAGTRH (262 aa)). Residue Ser2546 coordinates S-adenosyl-L-methionine. Ser2546 is subject to Phosphoserine. The active-site For 2'-O-MTase activity is the Lys2551. The short motif at 2567–2570 (VIDL) is the SUMO-interacting motif element. S-adenosyl-L-methionine-binding residues include Gly2576, Trp2577, Thr2594, Lys2595, Asp2621, and Val2622. The For 2'-O-MTase activity role is filled by Asp2636. An S-adenosyl-L-methionine-binding site is contributed by Ile2637. Active-site for 2'-O-MTase activity residues include Lys2670 and Glu2706. Tyr2708 lines the S-adenosyl-L-methionine pocket. Zn(2+) is bound by residues Glu2927, His2931, Cys2936, and Cys2939. In terms of domain architecture, RdRp catalytic spans 3018 to 3168 (AMYADDTAGW…PIDDRFANAL (151 aa)). His3202, Cys3218, and Cys3337 together coordinate Zn(2+).

In the N-terminal section; belongs to the class I-like SAM-binding methyltransferase superfamily. mRNA cap 0-1 NS5-type methyltransferase family. As to quaternary structure, homodimer. Interacts (via N-terminus) with host EXOC1 (via C-terminus); this interaction results in EXOC1 degradation through the proteasome degradation pathway. In terms of assembly, forms heterodimers with envelope protein E in the endoplasmic reticulum and Golgi. Homodimer; in the endoplasmic reticulum and Golgi. Interacts with protein prM. Interacts with non-structural protein 1. As to quaternary structure, homodimer; Homohexamer when secreted. Interacts with envelope protein E. In terms of assembly, interacts (via N-terminus) with serine protease NS3. Forms a heterodimer with serine protease NS3. May form homooligomers. As to quaternary structure, forms a heterodimer with NS2B. Interacts with NS4B. Interacts with unphosphorylated RNA-directed RNA polymerase NS5; this interaction stimulates RNA-directed RNA polymerase NS5 guanylyltransferase activity. In terms of assembly, interacts with host MAVS; this interaction inhibits the synthesis of IFN-beta. Interacts with host AUP1; the interaction occurs in the presence of Dengue virus NS4B and induces lipophagy which facilitates production of virus progeny particles. Interacts with serine protease NS3. As to quaternary structure, homodimer. Interacts with host STAT2; this interaction inhibits the phosphorylation of the latter, and, when all viral proteins are present (polyprotein), targets STAT2 for degradation. Interacts with serine protease NS3. Specific enzymatic cleavages in vivo yield mature proteins. Cleavages in the lumen of endoplasmic reticulum are performed by host signal peptidase, whereas cleavages in the cytoplasmic side are performed by serine protease NS3. Signal cleavage at the 2K-4B site requires a prior NS3 protease-mediated cleavage at the 4A-2K site. Post-translationally, cleaved in post-Golgi vesicles by a host furin, releasing the mature small envelope protein M, and peptide pr. This cleavage is incomplete as up to 30% of viral particles still carry uncleaved prM. In terms of processing, N-glycosylated. N-glycosylated. The excreted form is glycosylated and this is required for efficient secretion of the protein from infected cells. Post-translationally, acetylated by host KAT5. Acetylation modulates NS3 RNA-binding and unwinding activities and plays an important positive role for viral replication. In terms of processing, sumoylation of RNA-directed RNA polymerase NS5 increases NS5 protein stability allowing proper viral RNA replication. Phosphorylated on serines residues. This phosphorylation may trigger NS5 nuclear localization.

It is found in the virion. Its subcellular location is the host nucleus. The protein resides in the host cytoplasm. The protein localises to the host perinuclear region. It localises to the secreted. It is found in the virion membrane. Its subcellular location is the host endoplasmic reticulum membrane. The protein resides in the host mitochondrion. The enzyme catalyses Selective hydrolysis of -Xaa-Xaa-|-Yaa- bonds in which each of the Xaa can be either Arg or Lys and Yaa can be either Ser or Ala.. The catalysed reaction is RNA(n) + a ribonucleoside 5'-triphosphate = RNA(n+1) + diphosphate. It catalyses the reaction a ribonucleoside 5'-triphosphate + H2O = a ribonucleoside 5'-diphosphate + phosphate + H(+). It carries out the reaction ATP + H2O = ADP + phosphate + H(+). The enzyme catalyses a 5'-end (5'-triphosphoguanosine)-ribonucleoside in mRNA + S-adenosyl-L-methionine = a 5'-end (N(7)-methyl 5'-triphosphoguanosine)-ribonucleoside in mRNA + S-adenosyl-L-homocysteine. The catalysed reaction is a 5'-end (N(7)-methyl 5'-triphosphoguanosine)-ribonucleoside in mRNA + S-adenosyl-L-methionine = a 5'-end (N(7)-methyl 5'-triphosphoguanosine)-(2'-O-methyl-ribonucleoside) in mRNA + S-adenosyl-L-homocysteine + H(+). Plays a role in virus budding by binding to the cell membrane and gathering the viral RNA into a nucleocapsid that forms the core of a mature virus particle. During virus entry, may induce genome penetration into the host cytoplasm after hemifusion induced by the surface proteins. Can migrate to the cell nucleus where it modulates host functions. Overcomes the anti-viral effects of host EXOC1 by sequestering and degrading the latter through the proteasome degradation pathway. In terms of biological role, inhibits RNA silencing by interfering with host Dicer. Its function is as follows. Prevents premature fusion activity of envelope proteins in trans-Golgi by binding to envelope protein E at pH6.0. After virion release in extracellular space, gets dissociated from E dimers. Functionally, acts as a chaperone for envelope protein E during intracellular virion assembly by masking and inactivating envelope protein E fusion peptide. prM is the only viral peptide matured by host furin in the trans-Golgi network probably to avoid catastrophic activation of the viral fusion activity in acidic Golgi compartment prior to virion release. prM-E cleavage is inefficient, and many virions are only partially matured. These uncleaved prM would play a role in immune evasion. May play a role in virus budding. Exerts cytotoxic effects by activating a mitochondrial apoptotic pathway through M ectodomain. May display a viroporin activity. In terms of biological role, binds to host cell surface receptor and mediates fusion between viral and cellular membranes. Envelope protein is synthesized in the endoplasmic reticulum in the form of heterodimer with protein prM. They play a role in virion budding in the ER, and the newly formed immature particle is covered with 60 spikes composed of heterodimer between precursor prM and envelope protein E. The virion is transported to the Golgi apparatus where the low pH causes dissociation of PrM-E heterodimers and formation of E homodimers. prM-E cleavage is inefficient, and many virions are only partially matured. These uncleaved prM would play a role in immune evasion. Its function is as follows. Involved in immune evasion, pathogenesis and viral replication. Once cleaved off the polyprotein, is targeted to three destinations: the viral replication cycle, the plasma membrane and the extracellular compartment. Essential for viral replication. Required for formation of the replication complex and recruitment of other non-structural proteins to the ER-derived membrane structures. Excreted as a hexameric lipoparticle that plays a role against host immune response. Antagonizing the complement function. Binds to the host macrophages and dendritic cells. Inhibits signal transduction originating from Toll-like receptor 3 (TLR3). Functionally, disrupts the host endothelial glycocalyx layer of host pulmonary microvascular endothelial cells, inducing degradation of sialic acid and shedding of heparan sulfate proteoglycans. NS1 induces expression of sialidases, heparanase, and activates cathepsin L, which activates heparanase via enzymatic cleavage. These effects are probably linked to the endothelial hyperpermeability observed in severe dengue disease. Component of the viral RNA replication complex that functions in virion assembly and antagonizes the host immune response. In terms of biological role, required cofactor for the serine protease function of NS3. May have membrane-destabilizing activity and form viroporins. Its function is as follows. Displays three enzymatic activities: serine protease, NTPase and RNA helicase. NS3 serine protease, in association with NS2B, performs its autocleavage and cleaves the polyprotein at dibasic sites in the cytoplasm: C-prM, NS2A-NS2B, NS2B-NS3, NS3-NS4A, NS4A-2K and NS4B-NS5. NS3 RNA helicase binds RNA and unwinds dsRNA in the 3' to 5' direction. Functionally, regulates the ATPase activity of the NS3 helicase activity. NS4A allows NS3 helicase to conserve energy during unwinding. Plays a role in the inhibition of the host innate immune response. Interacts with host MAVS and thereby prevents the interaction between RIGI and MAVS. In turn, IFN-beta production is impaired. Interacts with host AUP1 which mediates induction of lipophagy in host cells and facilitates production of virus progeny particles. Functions as a signal peptide for NS4B and is required for the interferon antagonism activity of the latter. In terms of biological role, induces the formation of ER-derived membrane vesicles where the viral replication takes place. Inhibits interferon (IFN)-induced host STAT1 phosphorylation and nuclear translocation, thereby preventing the establishment of cellular antiviral state by blocking the IFN-alpha/beta pathway. Its function is as follows. Replicates the viral (+) and (-) RNA genome, and performs the capping of genomes in the cytoplasm. NS5 methylates viral RNA cap at guanine N-7 and ribose 2'-O positions. Besides its role in RNA genome replication, also prevents the establishment of cellular antiviral state by blocking the interferon-alpha/beta (IFN-alpha/beta) signaling pathway. Inhibits host TYK2 and STAT2 phosphorylation, thereby preventing activation of JAK-STAT signaling pathway. The chain is Genome polyprotein (pol) from Dengue virus type 3 (strain Martinique/1243/1999) (DENV-3).